A 325-amino-acid chain; its full sequence is DNA-directed RNA polymerase subunit alpha (325 aa).

The alpha N-terminal domain (alpha-NTD) stretch occupies residues Met1–Glu231. An alpha C-terminal domain (alpha-CTD) region spans residues Val246–Lys325.

The protein belongs to the RNA polymerase alpha chain family. Homodimer. The RNAP catalytic core consists of 2 alpha, 1 beta, 1 beta' and 1 omega subunit. When a sigma factor is associated with the core the holoenzyme is formed, which can initiate transcription.

It carries out the reaction RNA(n) + a ribonucleoside 5'-triphosphate = RNA(n+1) + diphosphate. Functionally, DNA-dependent RNA polymerase catalyzes the transcription of DNA into RNA using the four ribonucleoside triphosphates as substrates. In Janthinobacterium sp. (strain Marseille) (Minibacterium massiliensis), this protein is DNA-directed RNA polymerase subunit alpha.